A 484-amino-acid polypeptide reads, in one-letter code: MKFIVKLYPEIMMKSKPVRMRFTKMLETNIRNVLKKVDEDAKVQRQWDRIWVKVPNDKPELAQAFGERLACIPGIAHVVQVDEYSFTSVDDIYQQVLPVYRDQIAGKTFCVRVKRTGSHDFNSIEVERYVGGGLNQFTDAIGVRLKNPEVTVNLEIEGDKLYMVTKRIEGLGGFPMATQEDVLSLISGGFDSGVSSYQFIKKGARTHYCFFNLGGAQHEIGVKQVAYHLWKTYGESHKVKFVSVPFEPVVAEILEKIDNGQMGVVLKRMMMRTAARIAERMGIQAIVTGESLGQVSSQTLTNLNVIDRCTDMLILRPLIAMDKQDIINECRRIGTEDFAKSMPEYCGVISQKPTVKAVLAKVEAEETKFSEDLIDRIVEQAVAIDIREIAEQMNTRITETETVVAIDTNEVVIDIRAPEEEENKPLEIEGVEIKRIPFFKLATQFADLDKQKTYLLYCERGVMSKLQALYLIEQGYHNVKVYRP.

Positions 63–167 (QAFGERLACI…GDKLYMVTKR (105 aa)) constitute a THUMP domain. ATP contacts are provided by residues 185-186 (LI), Lys-267, Gly-289, and Gln-298. Cys-346 and Cys-458 are oxidised to a cystine. Residues 406–484 (IDTNEVVIDI…GYHNVKVYRP (79 aa)) enclose the Rhodanese domain. Cys-458 acts as the Cysteine persulfide intermediate in catalysis.

It belongs to the ThiI family.

The protein localises to the cytoplasm. It catalyses the reaction [ThiI sulfur-carrier protein]-S-sulfanyl-L-cysteine + a uridine in tRNA + 2 reduced [2Fe-2S]-[ferredoxin] + ATP + H(+) = [ThiI sulfur-carrier protein]-L-cysteine + a 4-thiouridine in tRNA + 2 oxidized [2Fe-2S]-[ferredoxin] + AMP + diphosphate. The catalysed reaction is [ThiS sulfur-carrier protein]-C-terminal Gly-Gly-AMP + S-sulfanyl-L-cysteinyl-[cysteine desulfurase] + AH2 = [ThiS sulfur-carrier protein]-C-terminal-Gly-aminoethanethioate + L-cysteinyl-[cysteine desulfurase] + A + AMP + 2 H(+). It functions in the pathway cofactor biosynthesis; thiamine diphosphate biosynthesis. Functionally, catalyzes the ATP-dependent transfer of a sulfur to tRNA to produce 4-thiouridine in position 8 of tRNAs, which functions as a near-UV photosensor. Also catalyzes the transfer of sulfur to the sulfur carrier protein ThiS, forming ThiS-thiocarboxylate. This is a step in the synthesis of thiazole, in the thiamine biosynthesis pathway. The sulfur is donated as persulfide by IscS. The sequence is that of tRNA sulfurtransferase from Shewanella sp. (strain ANA-3).